A 210-amino-acid chain; its full sequence is Nucleoside triphosphate pyrophosphatase (210 aa).

Asp-79 serves as the catalytic Proton acceptor.

This sequence belongs to the Maf family. The cofactor is a divalent metal cation.

It is found in the cytoplasm. The enzyme catalyses a ribonucleoside 5'-triphosphate + H2O = a ribonucleoside 5'-phosphate + diphosphate + H(+). The catalysed reaction is a 2'-deoxyribonucleoside 5'-triphosphate + H2O = a 2'-deoxyribonucleoside 5'-phosphate + diphosphate + H(+). Functionally, nucleoside triphosphate pyrophosphatase. May have a dual role in cell division arrest and in preventing the incorporation of modified nucleotides into cellular nucleic acids. The chain is Nucleoside triphosphate pyrophosphatase from Mycolicibacterium paratuberculosis (strain ATCC BAA-968 / K-10) (Mycobacterium paratuberculosis).